The chain runs to 130 residues: Fluoride-specific ion channel FluC (130 aa).

Transmembrane regions (helical) follow at residues 7-27, 36-56, 69-89, and 99-119; these read VLAI…LGLW, LGTL…VAVF, ALIT…AEVV, and LGFG…LAGI. Gly76 and Thr79 together coordinate Na(+).

It belongs to the fluoride channel Fluc/FEX (TC 1.A.43) family.

Its subcellular location is the cell inner membrane. The catalysed reaction is fluoride(in) = fluoride(out). With respect to regulation, na(+) is not transported, but it plays an essential structural role and its presence is essential for fluoride channel function. Functionally, fluoride-specific ion channel. Important for reducing fluoride concentration in the cell, thus reducing its toxicity. This is Fluoride-specific ion channel FluC from Albidiferax ferrireducens (strain ATCC BAA-621 / DSM 15236 / T118) (Rhodoferax ferrireducens).